Reading from the N-terminus, the 142-residue chain is Hemoglobin subunit alpha-1 (142 aa).

A Globin domain is found at 2 to 142 (KLSADDKHNV…VGYVLASKYR (141 aa)). H59 is an O2 binding site. H88 contacts heme b.

Belongs to the globin family. In terms of assembly, major hemoglobin is a heterotetramer of two alpha-1 chains and two beta-1 chains. As to expression, red blood cells.

In terms of biological role, involved in oxygen transport from the lung to the various peripheral tissues. The sequence is that of Hemoglobin subunit alpha-1 from Triturus cristatus (Great crested newt).